A 360-amino-acid polypeptide reads, in one-letter code: MTTTLQQRSTANVWDRFCEWITSTENRIYIGWFGVLMIPTLVSAIACFVIAFIAAPPVDIDGIREPVAGSLLYGNNIISGAVVPSSNAIGLHFYPIWEAASLDEWLYNGGPYQLVIFHFLIGVACYLGREWELSYRLGMRPWICVAFSAPVAAATAVFLIYPIGQGSFSDGMPLGISGTFNFMIVFQAEHNILMHPFHMLGVAGVFGGSLFSAMHGSLVTSSLVRETTETESQNYGYKFGQEEETYNIVAAHGYFGRLIFQYASFNNSRSLHFFLAAWPVIGIWFTALGVSTMAFNLNGFNFNQSIIDSQGRVIGTWADVINRANLGMEVMHERNAHNFPLDLAAGDVAPVALTAPPING.

Helical transmembrane passes span 29-46, 118-133, and 142-156; these read YIGWFGVLMIPTLVSAIA, HFLIGVACYLGREWEL, and WICVAFSAPVAAATA. Histidine 118 provides a ligand contact to chlorophyll a. Tyrosine 126 contacts pheophytin a. The [CaMn4O5] cluster site is built by aspartate 170 and glutamate 189. A helical transmembrane segment spans residues 197–218; that stretch reads FHMLGVAGVFGGSLFSAMHGSL. A chlorophyll a-binding site is contributed by histidine 198. Residues histidine 215 and 264–265 each bind a quinone; that span reads SF. Residue histidine 215 coordinates Fe cation. Residue histidine 272 coordinates Fe cation. A helical transmembrane segment spans residues 274–288; sequence FLAAWPVIGIWFTAL. Residues histidine 332, glutamate 333, aspartate 342, and alanine 344 each contribute to the [CaMn4O5] cluster site. Positions 345–360 are excised as a propeptide; sequence AGDVAPVALTAPPING.

The protein belongs to the reaction center PufL/M/PsbA/D family. In terms of assembly, PSII is composed of 1 copy each of membrane proteins PsbA, PsbB, PsbC, PsbD, PsbE, PsbF, PsbH, PsbI, PsbJ, PsbK, PsbL, PsbM, PsbT, PsbX, PsbY, PsbZ, Psb30/Ycf12, peripheral proteins PsbO, CyanoQ (PsbQ), PsbU, PsbV and a large number of cofactors. It forms dimeric complexes. It depends on The D1/D2 heterodimer binds P680, chlorophylls that are the primary electron donor of PSII, and subsequent electron acceptors. It shares a non-heme iron and each subunit binds pheophytin, quinone, additional chlorophylls, carotenoids and lipids. D1 provides most of the ligands for the Mn4-Ca-O5 cluster of the oxygen-evolving complex (OEC). There is also a Cl(-1) ion associated with D1 and D2, which is required for oxygen evolution. The PSII complex binds additional chlorophylls, carotenoids and specific lipids. as a cofactor. In terms of processing, tyr-161 forms a radical intermediate that is referred to as redox-active TyrZ, YZ or Y-Z. Post-translationally, C-terminally processed by CtpA; processing is essential to allow assembly of the oxygen-evolving complex and thus photosynthetic growth.

The protein resides in the cellular thylakoid membrane. The catalysed reaction is 2 a plastoquinone + 4 hnu + 2 H2O = 2 a plastoquinol + O2. Photosystem II (PSII) is a light-driven water:plastoquinone oxidoreductase that uses light energy to abstract electrons from H(2)O, generating O(2) and a proton gradient subsequently used for ATP formation. It consists of a core antenna complex that captures photons, and an electron transfer chain that converts photonic excitation into a charge separation. The D1/D2 (PsbA/PsbD) reaction center heterodimer binds P680, the primary electron donor of PSII as well as several subsequent electron acceptors. The chain is Photosystem II protein D1 from Trichormus azollae (Anabaena azollae).